Here is a 145-residue protein sequence, read N- to C-terminus: Large ribosomal subunit protein uL13 (145 aa).

It belongs to the universal ribosomal protein uL13 family. As to quaternary structure, part of the 50S ribosomal subunit.

This protein is one of the early assembly proteins of the 50S ribosomal subunit, although it is not seen to bind rRNA by itself. It is important during the early stages of 50S assembly. This Listeria monocytogenes serotype 4b (strain CLIP80459) protein is Large ribosomal subunit protein uL13.